We begin with the raw amino-acid sequence, 564 residues long: Dihydroxy-acid dehydratase (564 aa).

C55 provides a ligand contact to [2Fe-2S] cluster. D87 lines the Mg(2+) pocket. C128 is a binding site for [2Fe-2S] cluster. Mg(2+)-binding residues include D129 and K130. An N6-carboxylysine modification is found at K130. Residue C200 participates in [2Fe-2S] cluster binding. E452 contacts Mg(2+). The active-site Proton acceptor is S478.

This sequence belongs to the IlvD/Edd family. Homodimer. Requires [2Fe-2S] cluster as cofactor. It depends on Mg(2+) as a cofactor.

It catalyses the reaction (2R)-2,3-dihydroxy-3-methylbutanoate = 3-methyl-2-oxobutanoate + H2O. The catalysed reaction is (2R,3R)-2,3-dihydroxy-3-methylpentanoate = (S)-3-methyl-2-oxopentanoate + H2O. It functions in the pathway amino-acid biosynthesis; L-isoleucine biosynthesis; L-isoleucine from 2-oxobutanoate: step 3/4. The protein operates within amino-acid biosynthesis; L-valine biosynthesis; L-valine from pyruvate: step 3/4. In terms of biological role, functions in the biosynthesis of branched-chain amino acids. Catalyzes the dehydration of (2R,3R)-2,3-dihydroxy-3-methylpentanoate (2,3-dihydroxy-3-methylvalerate) into 2-oxo-3-methylpentanoate (2-oxo-3-methylvalerate) and of (2R)-2,3-dihydroxy-3-methylbutanoate (2,3-dihydroxyisovalerate) into 2-oxo-3-methylbutanoate (2-oxoisovalerate), the penultimate precursor to L-isoleucine and L-valine, respectively. This Polaromonas naphthalenivorans (strain CJ2) protein is Dihydroxy-acid dehydratase.